Here is a 368-residue protein sequence, read N- to C-terminus: Chaperone protein DnaJ (368 aa).

One can recognise a J domain in the interval 5–75 (DFYKILGVEK…TKRKQYDKFG (71 aa)). The segment at 139 to 222 (GKEISQKLTK…CRGKTIVETK (84 aa)) adopts a CR-type zinc-finger fold. Cys152, Cys155, Cys169, Cys172, Cys196, Cys199, Cys210, and Cys213 together coordinate Zn(2+). 4 CXXCXGXG motif repeats span residues 152-159 (CDNCKGSG), 169-176 (CYNCQGRG), 196-203 (CSVCLGSG), and 210-217 (CKKCRGKT).

Belongs to the DnaJ family. As to quaternary structure, homodimer. The cofactor is Zn(2+).

It localises to the cytoplasm. In terms of biological role, participates actively in the response to hyperosmotic and heat shock by preventing the aggregation of stress-denatured proteins and by disaggregating proteins, also in an autonomous, DnaK-independent fashion. Unfolded proteins bind initially to DnaJ; upon interaction with the DnaJ-bound protein, DnaK hydrolyzes its bound ATP, resulting in the formation of a stable complex. GrpE releases ADP from DnaK; ATP binding to DnaK triggers the release of the substrate protein, thus completing the reaction cycle. Several rounds of ATP-dependent interactions between DnaJ, DnaK and GrpE are required for fully efficient folding. Also involved, together with DnaK and GrpE, in the DNA replication of plasmids through activation of initiation proteins. The chain is Chaperone protein DnaJ from Mesomycoplasma hyopneumoniae (strain 232) (Mycoplasma hyopneumoniae).